Here is a 326-residue protein sequence, read N- to C-terminus: Glycerol-3-phosphate dehydrogenase [NAD(P)+] (326 aa).

Positions 13, 33, and 107 each coordinate NADPH. Sn-glycerol 3-phosphate-binding residues include lysine 107, glycine 135, and serine 137. Alanine 139 provides a ligand contact to NADPH. Residues lysine 190, aspartate 243, serine 253, arginine 254, and asparagine 255 each contribute to the sn-glycerol 3-phosphate site. The Proton acceptor role is filled by lysine 190. Arginine 254 contacts NADPH. The NADPH site is built by leucine 273 and glutamate 275.

The protein belongs to the NAD-dependent glycerol-3-phosphate dehydrogenase family.

It is found in the cytoplasm. The enzyme catalyses sn-glycerol 3-phosphate + NAD(+) = dihydroxyacetone phosphate + NADH + H(+). The catalysed reaction is sn-glycerol 3-phosphate + NADP(+) = dihydroxyacetone phosphate + NADPH + H(+). It participates in membrane lipid metabolism; glycerophospholipid metabolism. Its function is as follows. Catalyzes the reduction of the glycolytic intermediate dihydroxyacetone phosphate (DHAP) to sn-glycerol 3-phosphate (G3P), the key precursor for phospholipid synthesis. This is Glycerol-3-phosphate dehydrogenase [NAD(P)+] from Brucella ovis (strain ATCC 25840 / 63/290 / NCTC 10512).